The primary structure comprises 243 residues: tRNA (guanine-N(1)-)-methyltransferase (243 aa).

S-adenosyl-L-methionine contacts are provided by residues Gly-108 and 127–132; that span reads LGDFVL.

Belongs to the RNA methyltransferase TrmD family. Homodimer.

It is found in the cytoplasm. It carries out the reaction guanosine(37) in tRNA + S-adenosyl-L-methionine = N(1)-methylguanosine(37) in tRNA + S-adenosyl-L-homocysteine + H(+). In terms of biological role, specifically methylates guanosine-37 in various tRNAs. This chain is tRNA (guanine-N(1)-)-methyltransferase, found in Streptococcus pyogenes serotype M2 (strain MGAS10270).